The sequence spans 90 residues: Auxin-responsive protein SAUR22 (90 aa).

This sequence belongs to the ARG7 family.

The protein localises to the cell membrane. In terms of biological role, functions as a positive effector of cell expansion through modulation of auxin transport. This Arabidopsis thaliana (Mouse-ear cress) protein is Auxin-responsive protein SAUR22.